Consider the following 281-residue polypeptide: Putative integrase/recombinase y4rD (281 aa).

The Core-binding (CB) domain maps to 5-98; that stretch reads LLLAPLLESY…AIRSFFHHVA (94 aa). Positions 122 to 281 constitute a Tyr recombinase domain; that stretch reads EVTHHLTKAE…TMSGTENASV (160 aa). Catalysis depends on residues R162, K188, H262, and R265.

The protein belongs to the 'phage' integrase family.

Functionally, seems to be non-functional. The protein is Putative integrase/recombinase y4rD of Sinorhizobium fredii (strain NBRC 101917 / NGR234).